We begin with the raw amino-acid sequence, 62 residues long: Conotoxin reg3.5 (62 aa).

The signal sequence occupies residues 1–22 (MMFKLGVLLTICLLLFPLTGTA). Positions 23–49 (LDGDQLAEHMLDISSGINDRWFDPVRK) are excised as a propeptide. Disulfide bonds link Cys-50-Cys-60, Cys-51-Cys-58, and Cys-56-Cys-61.

This sequence belongs to the conotoxin M superfamily. In terms of tissue distribution, expressed by the venom duct.

It localises to the secreted. The protein is Conotoxin reg3.5 of Conus regius (Crown cone).